Consider the following 123-residue polypeptide: Small ribosomal subunit protein uS12 (123 aa).

Residues 1–22 form a disordered region; the sequence is MATINQLVRQPRKRSVEKSDVP. The residue at position 89 (Asp89) is a 3-methylthioaspartic acid. Residues 100–123 form a disordered region; it reads GSLDTSGVKGRNQGRSKYGTKRPK. Residues 111–123 show a composition bias toward basic residues; it reads NQGRSKYGTKRPK.

It belongs to the universal ribosomal protein uS12 family. Part of the 30S ribosomal subunit. Contacts proteins S8 and S17. May interact with IF1 in the 30S initiation complex.

With S4 and S5 plays an important role in translational accuracy. In terms of biological role, interacts with and stabilizes bases of the 16S rRNA that are involved in tRNA selection in the A site and with the mRNA backbone. Located at the interface of the 30S and 50S subunits, it traverses the body of the 30S subunit contacting proteins on the other side and probably holding the rRNA structure together. The combined cluster of proteins S8, S12 and S17 appears to hold together the shoulder and platform of the 30S subunit. The sequence is that of Small ribosomal subunit protein uS12 from Pseudomonas entomophila (strain L48).